We begin with the raw amino-acid sequence, 120 residues long: BLOC-1-related complex subunit 8 (120 aa).

Residues 101-120 form a disordered region; it reads MNTSAQGHSQEKLSPPPSLA. Ser-109 bears the Phosphoserine mark.

It belongs to the BORCS8 family. As to quaternary structure, component of the BLOC-one-related complex (BORC) which is composed of BLOC1S1, BLOC1S2, BORCS5, BORCS6, BORCS7, BORCS8, KXD1 and SNAPIN.

Its subcellular location is the lysosome membrane. Functionally, as part of the BLOC-one-related complex (BORC), it plays a role in the movement and localization of lysosomes at the cell periphery. Associated with the cytosolic face of lysosomes, BORC recruits ARL8B to the lysosomal membrane and couples lysosomes to microtubule plus-end-directed kinesin motors, driving lysosome movement toward the cell periphery. The chain is BLOC-1-related complex subunit 8 from Mus musculus (Mouse).